The following is a 94-amino-acid chain: uncharacterized protein (94 aa).

2 helical membrane-spanning segments follow: residues 7-24 (IFFI…SFNV) and 39-61 (AVPI…LLFL). Residues 68 to 94 (TRKQKREDSPTSAPTGGVSSPEHVDVP) form a disordered region.

Its subcellular location is the cell membrane. This is an uncharacterized protein from Treponema pallidum (strain Nichols).